The sequence spans 119 residues: V-type proton ATPase subunit F (119 aa).

It belongs to the V-ATPase F subunit family. As to quaternary structure, V-ATPase is a heteromultimeric enzyme made up of two complexes: the ATP-hydrolytic V1 complex and the proton translocation V0 complex. The V1 complex consists of three catalytic AB heterodimers that form a heterohexamer, three peripheral stalks each consisting of EG heterodimers, one central rotor including subunits D and F, and the regulatory subunits C and H. The proton translocation complex V0 consists of the proton transport subunit a, a ring of proteolipid subunits c9c'', rotary subunit d, subunits e and f, and the accessory subunits ATP6AP1/Ac45 and ATP6AP2/PRR. In terms of tissue distribution, expressed in brain (at protein level).

It localises to the cytoplasmic vesicle. It is found in the secretory vesicle. The protein localises to the synaptic vesicle membrane. The protein resides in the clathrin-coated vesicle membrane. Functionally, subunit of the V1 complex of vacuolar(H+)-ATPase (V-ATPase), a multisubunit enzyme composed of a peripheral complex (V1) that hydrolyzes ATP and a membrane integral complex (V0) that translocates protons. V-ATPase is responsible for acidifying and maintaining the pH of intracellular compartments and in some cell types, is targeted to the plasma membrane, where it is responsible for acidifying the extracellular environment. The chain is V-type proton ATPase subunit F (ATP6V1F) from Bos taurus (Bovine).